The chain runs to 336 residues: MQDFKTHLEPLKEGKNLLGFSGGLDSTCLFFLLVGENIVFDIALVDYNTQKQRLEIIQHAQKLAKTHHKKCYIHHAPKIAHNFEMQARKIRYDFFETLIKEHSYKHLILAHHLNDRLEWFLMQLSKGAGLNTLLSFQAYEKRESYAIVRPLLYTPKDTLKTLAKDLKFFEDDSNSSLKFKRNCFRKNYANSLMQDYSKGIIQSFKFLDQEKERLYPLTIVSQMHGITFFKYSQNALFMVDKILKQKGYVLSFSQKEEIKRSFFSLEIAQKFIIESDKEHVFIALKPPKTLSMPKDFKDRARRLDIPKRLRPVLYAEFLKQPTHDFLTRFKQSLMDL.

21-26 (SGGLDS) provides a ligand contact to ATP.

It belongs to the tRNA(Ile)-lysidine synthase family.

Its subcellular location is the cytoplasm. The enzyme catalyses cytidine(34) in tRNA(Ile2) + L-lysine + ATP = lysidine(34) in tRNA(Ile2) + AMP + diphosphate + H(+). Functionally, ligates lysine onto the cytidine present at position 34 of the AUA codon-specific tRNA(Ile) that contains the anticodon CAU, in an ATP-dependent manner. Cytidine is converted to lysidine, thus changing the amino acid specificity of the tRNA from methionine to isoleucine. This is tRNA(Ile)-lysidine synthase from Helicobacter pylori (strain ATCC 700392 / 26695) (Campylobacter pylori).